The chain runs to 242 residues: Putative prolyl 4-hydroxylase (242 aa).

Residues 128-238 (NAEDLQVVRY…KWIANLWFRE (111 aa)) form the Fe2OG dioxygenase domain.

Belongs to the P4HA family. Fe cation serves as cofactor. Requires L-ascorbate as cofactor.

It is found in the virion. The catalysed reaction is L-prolyl-[collagen] + 2-oxoglutarate + O2 = trans-4-hydroxy-L-prolyl-[collagen] + succinate + CO2. Its function is as follows. May catalyze the post-translational formation of 4-hydroxyproline in -Xaa-Pro-Gly- sequences in the 6 collagen-like proteins of Mimivirus. In Acanthamoeba polyphaga mimivirus (APMV), this protein is Putative prolyl 4-hydroxylase.